The chain runs to 507 residues: ATP synthase subunit alpha, chloroplastic (507 aa).

170–177 (GDRQTGKT) is a binding site for ATP.

Belongs to the ATPase alpha/beta chains family. In terms of assembly, F-type ATPases have 2 components, CF(1) - the catalytic core - and CF(0) - the membrane proton channel. CF(1) has five subunits: alpha(3), beta(3), gamma(1), delta(1), epsilon(1). CF(0) has four main subunits: a, b, b' and c.

Its subcellular location is the plastid. The protein resides in the chloroplast thylakoid membrane. The enzyme catalyses ATP + H2O + 4 H(+)(in) = ADP + phosphate + 5 H(+)(out). Its function is as follows. Produces ATP from ADP in the presence of a proton gradient across the membrane. The alpha chain is a regulatory subunit. This is ATP synthase subunit alpha, chloroplastic from Liriodendron tulipifera (Tuliptree).